The primary structure comprises 376 residues: Arginine/serine-rich coiled-coil protein 2 (376 aa).

A disordered region spans residues 1 to 171; the sequence is MIRTNFLLKQ…PSPPPFRGRN (171 aa). A compositionally biased stretch (basic and acidic residues) spans 13–52; it reads RHESKDKSSKRHKSEEHNDKEHSSDKGRERLNSSENGEDR. Residue Ser-45 is modified to Phosphoserine. Over residues 53 to 155 the composition is skewed to basic residues; the sequence is HKRKERKSSR…KRIEKPRRFS (103 aa). A coiled-coil region spans residues 171 to 214; sequence NTAMDAQEALARRLERAKKLQEQREKEMVEKQKQQEMAAAAAAT. Residue Lys-317 forms a Glycyl lysine isopeptide (Lys-Gly) (interchain with G-Cter in SUMO1); alternate linkage. Residue Lys-317 forms a Glycyl lysine isopeptide (Lys-Gly) (interchain with G-Cter in SUMO2); alternate linkage. Ser-318 bears the Phosphoserine mark.

The protein belongs to the RSRC2 family.

The polypeptide is Arginine/serine-rich coiled-coil protein 2 (Rsrc2) (Rattus norvegicus (Rat)).